The primary structure comprises 66 residues: COP-associated protein (66 aa).

In terms of domain architecture, HMA spans 1–66; it reads MKVTFQVPSI…ALLDAGQEVV (66 aa). Cysteine 12 and cysteine 15 together coordinate Cu cation.

In terms of biological role, part of a cation-transporting system which is associated with copper export out of the H.pylori cells. The polypeptide is COP-associated protein (copP) (Helicobacter pylori (strain J99 / ATCC 700824) (Campylobacter pylori J99)).